The chain runs to 371 residues: Histidinol-phosphate aminotransferase 2 (371 aa).

The residue at position 232 (Lys-232) is an N6-(pyridoxal phosphate)lysine.

It belongs to the class-II pyridoxal-phosphate-dependent aminotransferase family. Histidinol-phosphate aminotransferase subfamily. As to quaternary structure, homodimer. It depends on pyridoxal 5'-phosphate as a cofactor.

It carries out the reaction L-histidinol phosphate + 2-oxoglutarate = 3-(imidazol-4-yl)-2-oxopropyl phosphate + L-glutamate. It functions in the pathway amino-acid biosynthesis; L-histidine biosynthesis; L-histidine from 5-phospho-alpha-D-ribose 1-diphosphate: step 7/9. The chain is Histidinol-phosphate aminotransferase 2 from Methylococcus capsulatus (strain ATCC 33009 / NCIMB 11132 / Bath).